Reading from the N-terminus, the 327-residue chain is uncharacterized protein (327 aa).

The region spanning 32–105 (VRLDKWLAEQ…IPLDILYEDE (74 aa)) is the S4 RNA-binding domain. The active site involves aspartate 156.

The protein belongs to the pseudouridine synthase RluA family.

The enzyme catalyses a uridine in RNA = a pseudouridine in RNA. This is an uncharacterized protein from Synechocystis sp. (strain ATCC 27184 / PCC 6803 / Kazusa).